The chain runs to 418 residues: Deoxyribonuclease Tat-D (418 aa).

Glu185, His226, His277, and Asp327 together coordinate a divalent metal cation.

It belongs to the metallo-dependent hydrolases superfamily. TatD-type hydrolase family. Mg(2+) serves as cofactor.

The protein resides in the cytoplasm. In terms of biological role, has both endo- and exonuclease activities. Incises double-stranded DNA without obvious specificity via its endonuclease activity and excises the DNA from the 3'-to 5'-end by its exonuclease activity. May have a role in apoptosis. This chain is Deoxyribonuclease Tat-D, found in Saccharomyces cerevisiae (strain ATCC 204508 / S288c) (Baker's yeast).